Reading from the N-terminus, the 412-residue chain is Double C2-like domain-containing protein beta (412 aa).

The interval 1-36 (MTLRRRGEKATISIQEHMAIDVCPGPIRPIKQISDY) is negatively regulates targeting to plasma membrane. The tract at residues 1–90 (MTLRRRGEKA…EDVDQLFGAY (90 aa)) is mediates interaction with DYNLT1. The disordered stretch occupies residues 38-123 (PRFPRGLPPT…PDADGYESDD (86 aa)). Residues 49–73 (APRASAPPDAPARSPAATAGPRSPS) show a composition bias toward low complexity. Residues 95-108 (GPSPGPSPVRPPAK) are compositionally biased toward pro residues. The span at 112–123 (DEPDADGYESDD) shows a compositional bias: acidic residues. C2 domains are found at residues 126–250 (ALGT…SICL) and 266–399 (ERGR…ERWH). Ca(2+) is bound by residues aspartate 157, aspartate 163, aspartate 218, aspartate 220, aspartate 297, aspartate 303, aspartate 357, aspartate 359, and aspartate 365. A mediates interaction with STXBP3 region spans residues 257-375 (DKAEDKSLEE…FIGGVVLGIN (119 aa)). Serine 411 carries the post-translational modification Phosphoserine.

As to quaternary structure, interacts with STX4; the interaction is calcium-dependent, increased by insulin and glucose, and mediates vesicle fusion with plasma membrane in pancreatic cells and adipocytes. Interacts with STXBP3; the interaction is direct, occurs at the cell membrane and regulates glucose-stimulated insulin secretion. Interacts with cytoplasmic dynein light chain DYNLT1. Interacts with the SNARE (soluble N-ethylmaleimide-sensitive factor attached protein receptor) complex composed of SNAP25, STX1A and VAMP2; the interaction is calcium-dependent and competitive with SYT1. May interact with UNC13A; the interaction mediates targeting to the plasma membrane. The cofactor is Ca(2+). Expressed in brain; highly enriched in neurons.

The protein resides in the cytoplasm. It localises to the cytoplasmic granule. Its subcellular location is the cell membrane. Calcium sensor which positively regulates SNARE-dependent fusion of vesicles with membranes. Binds phospholipids in a calcium-dependent manner and may act at the priming stage of fusion by modifying membrane curvature to stimulate fusion. Involved in calcium-triggered exocytosis in chromaffin cells and calcium-dependent spontaneous release of neurotransmitter in absence of action potentials in neuronal cells. Involved both in glucose-stimulated insulin secretion in pancreatic cells and insulin-dependent GLUT4 transport to the plasma membrane in adipocytes. The chain is Double C2-like domain-containing protein beta (Doc2b) from Rattus norvegicus (Rat).